The chain runs to 69 residues: Large ribosomal subunit protein bL31 (69 aa).

Zn(2+)-binding residues include Cys16, Cys18, Cys37, and Cys40.

This sequence belongs to the bacterial ribosomal protein bL31 family. Type A subfamily. In terms of assembly, part of the 50S ribosomal subunit. It depends on Zn(2+) as a cofactor.

Functionally, binds the 23S rRNA. This Teredinibacter turnerae (strain ATCC 39867 / T7901) protein is Large ribosomal subunit protein bL31.